We begin with the raw amino-acid sequence, 497 residues long: DNA-dependent metalloprotease SPRTN (497 aa).

M1 bears the N-acetylmethionine mark. In terms of domain architecture, SprT-like spans 46 to 213 (LQALFLQFND…KTCGGTYIKI (168 aa)). Zn(2+) is bound at residue H112. E113 is an active-site residue. Positions 116 and 131 each coordinate Zn(2+). Position 231 is an N6-acetyllysine (K231). The short motif at 254–262 (FSGKGYVLG) is the SHP-box element. The residue at position 269 (S269) is a Phosphoserine. Residue K304 forms a Glycyl lysine isopeptide (Lys-Gly) (interchain with G-Cter in SUMO2) linkage. A PIP-box motif is present at residues 326 to 333 (QSVLSSYF). K342 participates in a covalent cross-link: Glycyl lysine isopeptide (Lys-Gly) (interchain with G-Cter in SUMO2); alternate. A Glycyl lysine isopeptide (Lys-Gly) (interchain with G-Cter in ubiquitin); alternate cross-link involves residue K342. The tract at residues 344–459 (FRNVNGSPVK…ASAPQSLSSQ (116 aa)) is disordered. Residues 347-356 (VNGSPVKNGT) are compositionally biased toward polar residues. K362 is covalently cross-linked (Glycyl lysine isopeptide (Lys-Gly) (interchain with G-Cter in SUMO2)). Residues 383–404 (TSKVTAPASATVTSAAGTSATI) are compositionally biased toward low complexity. A Phosphoserine modification is found at S384. Positions 413–424 (DQFLNKRPRLED) match the Nuclear localization signal motif. The span at 420-432 (PRLEDRTALDTIK) shows a compositional bias: basic and acidic residues. Residue K432 forms a Glycyl lysine isopeptide (Lys-Gly) (interchain with G-Cter in SUMO2) linkage. The span at 442 to 459 (RSSSQPTAASAPQSLSSQ) shows a compositional bias: low complexity. The UBZ4-type zinc-finger motif lies at 462–489 (LVNCPVCQGVVVESQINEHLDRCLEGNK). 4 residues coordinate Zn(2+): C465, C468, H480, and C484.

It belongs to the Spartan family. As to quaternary structure, homodimer. Interacts (VIA PIP-box) with PCNA (when ubiquitinated). Interacts (via its SHP-box) with VCP/p97. Interacts with RAD18. Interacts with KCTD13 and POLD3. The cofactor is Zn(2+). Autocatalytically cleaved in response to double-stranded DNA-binding: autocatalytic cleavage takes place in trans and leads to inactivation. In terms of processing, monoubiquitinated; monoubiquitination promotes exclusion from chromatin. Deubiquitinated by VCPIP1: deubiquitination is required for subsequent acetylation and recruitment to chromatin and DNA damage sites. Post-translationally, acetylated following deubiquitination by VCPIP1, leading to recruitment to chromatin and DNA damage sites. Phosphorylation by CHEK1 promotes recruitment to chromatin.

Its subcellular location is the nucleus. It is found in the chromosome. Its activity is regulated as follows. DNA-binding activates the protease activity: single-stranded DNA-binding specifically activates ability to cleave covalent DNA-protein cross-links (DPCs). In contrast, double-stranded DNA-binding specifically activates autocatalytic cleavage, and subsequent inactivation. DNA-dependent metalloendopeptidase that mediates the proteolytic cleavage of covalent DNA-protein cross-links (DPCs) during DNA synthesis, thereby playing a key role in maintaining genomic integrity. DPCs are highly toxic DNA lesions that interfere with essential chromatin transactions, such as replication and transcription, and which are induced by reactive agents, such as UV light or formaldehyde. Associates with the DNA replication machinery and specifically removes DPCs during DNA synthesis. Catalyzes proteolytic cleavage of the HMCES DNA-protein cross-link following unfolding by the BRIP1/FANCJ helicase. Acts as a pleiotropic protease for DNA-binding proteins cross-linked with DNA, such as TOP1, TOP2A, histones H3 and H4. Mediates degradation of DPCs that are not ubiquitinated, while it is not able to degrade ubiquitinated DPCs. SPRTN activation requires polymerase collision with DPCs followed by helicase bypass of DPCs. Involved in recruitment of VCP/p97 to sites of DNA damage. Also acts as an activator of CHEK1 during normal DNA replication by mediating proteolytic cleavage of CHEK1, thereby promoting CHEK1 removal from chromatin and subsequent activation. Does not activate CHEK1 in response to DNA damage. May also act as a 'reader' of ubiquitinated PCNA: recruited to sites of UV damage and interacts with ubiquitinated PCNA and RAD18, the E3 ubiquitin ligase that monoubiquitinates PCNA. Facilitates chromatin association of RAD18 and is required for efficient PCNA monoubiquitination, promoting a feed-forward loop to enhance PCNA ubiquitination and translesion DNA synthesis. The protein is DNA-dependent metalloprotease SPRTN of Mus musculus (Mouse).